The following is a 213-amino-acid chain: Imidazole glycerol phosphate synthase subunit HisH (213 aa).

In terms of domain architecture, Glutamine amidotransferase type-1 spans Thr8–Pro213. Cys91 acts as the Nucleophile in catalysis. Residues His193 and Glu195 contribute to the active site.

Heterodimer of HisH and HisF.

The protein resides in the cytoplasm. It catalyses the reaction 5-[(5-phospho-1-deoxy-D-ribulos-1-ylimino)methylamino]-1-(5-phospho-beta-D-ribosyl)imidazole-4-carboxamide + L-glutamine = D-erythro-1-(imidazol-4-yl)glycerol 3-phosphate + 5-amino-1-(5-phospho-beta-D-ribosyl)imidazole-4-carboxamide + L-glutamate + H(+). The catalysed reaction is L-glutamine + H2O = L-glutamate + NH4(+). The protein operates within amino-acid biosynthesis; L-histidine biosynthesis; L-histidine from 5-phospho-alpha-D-ribose 1-diphosphate: step 5/9. IGPS catalyzes the conversion of PRFAR and glutamine to IGP, AICAR and glutamate. The HisH subunit catalyzes the hydrolysis of glutamine to glutamate and ammonia as part of the synthesis of IGP and AICAR. The resulting ammonia molecule is channeled to the active site of HisF. This chain is Imidazole glycerol phosphate synthase subunit HisH, found in Zymomonas mobilis subsp. mobilis (strain ATCC 31821 / ZM4 / CP4).